We begin with the raw amino-acid sequence, 274 residues long: ATP synthase subunit delta (274 aa).

The protein belongs to the ATPase delta chain family. In terms of assembly, F-type ATPases have 2 components, F(1) - the catalytic core - and F(0) - the membrane proton channel. F(1) has five subunits: alpha(3), beta(3), gamma(1), delta(1), epsilon(1). F(0) has three main subunits: a(1), b(2) and c(10-14). The alpha and beta chains form an alternating ring which encloses part of the gamma chain. F(1) is attached to F(0) by a central stalk formed by the gamma and epsilon chains, while a peripheral stalk is formed by the delta and b chains.

It is found in the cell membrane. Functionally, f(1)F(0) ATP synthase produces ATP from ADP in the presence of a proton or sodium gradient. F-type ATPases consist of two structural domains, F(1) containing the extramembraneous catalytic core and F(0) containing the membrane proton channel, linked together by a central stalk and a peripheral stalk. During catalysis, ATP synthesis in the catalytic domain of F(1) is coupled via a rotary mechanism of the central stalk subunits to proton translocation. In terms of biological role, this protein is part of the stalk that links CF(0) to CF(1). It either transmits conformational changes from CF(0) to CF(1) or is implicated in proton conduction. The protein is ATP synthase subunit delta of Salinispora arenicola (strain CNS-205).